A 343-amino-acid polypeptide reads, in one-letter code: Annexin A1 isoform p37 (343 aa).

Gln19 is covalently cross-linked (Isoglutamyl lysine isopeptide (Gln-Lys) (interchain with K-?)). Tyr21 carries the phosphotyrosine; by EGFR; in vitro modification. A Phosphoserine; by PKC; in vitro modification is found at Ser24. Annexin repeat units lie at residues 38 to 109 (FDPS…ALLK), 110 to 181 (TPAQ…VLAK), 193 to 265 (DLAD…ALVK), and 269 to 340 (SKPA…ALCG).

Belongs to the annexin family. In terms of processing, phosphorylated by protein kinase C and epidermal growth factor receptor/kinase. The N-terminus is blocked.

It is found in the nucleus. The protein resides in the cytoplasm. Its subcellular location is the cell projection. It localises to the cilium. The protein localises to the basolateral cell membrane. Calcium/phospholipid-binding protein which promotes membrane fusion and is involved in exocytosis. This protein regulates phospholipase A2 activity. It seems to bind from two to four calcium ions with high affinity. This Columba livia (Rock dove) protein is Annexin A1 isoform p37 (CP37).